Here is a 112-residue protein sequence, read N- to C-terminus: U-scoloptoxin(16)-Er5a (112 aa).

Positions 1-26 are cleaved as a signal peptide; sequence MNTVSVVQFLAVGCAVFVLYGRGVFA.

It belongs to the scoloptoxin-16 family. Post-translationally, contains 2 disulfide bonds. Expressed by the venom gland.

It is found in the secreted. The chain is U-scoloptoxin(16)-Er5a from Ethmostigmus rubripes (Giant centipede).